The primary structure comprises 214 residues: 3,4-dihydroxy-2-butanone 4-phosphate synthase (214 aa).

D-ribulose 5-phosphate-binding positions include 37 to 38, aspartate 42, 150 to 154, and glutamate 174; these read RE and RRGHT. A Mg(2+)-binding site is contributed by glutamate 38. Histidine 153 provides a ligand contact to Mg(2+).

Belongs to the DHBP synthase family. In terms of assembly, homodimer. Requires Mg(2+) as cofactor. Mn(2+) serves as cofactor.

The enzyme catalyses D-ribulose 5-phosphate = (2S)-2-hydroxy-3-oxobutyl phosphate + formate + H(+). It functions in the pathway cofactor biosynthesis; riboflavin biosynthesis; 2-hydroxy-3-oxobutyl phosphate from D-ribulose 5-phosphate: step 1/1. Its function is as follows. Catalyzes the conversion of D-ribulose 5-phosphate to formate and 3,4-dihydroxy-2-butanone 4-phosphate. In Nitratidesulfovibrio vulgaris (strain ATCC 29579 / DSM 644 / CCUG 34227 / NCIMB 8303 / VKM B-1760 / Hildenborough) (Desulfovibrio vulgaris), this protein is 3,4-dihydroxy-2-butanone 4-phosphate synthase.